The following is a 95-amino-acid chain: Large ribosomal subunit protein bL25 (95 aa).

Residues 1–20 form a disordered region; the sequence is MSFKFNAEVRSKQGKGASRR.

This sequence belongs to the bacterial ribosomal protein bL25 family. Part of the 50S ribosomal subunit; part of the 5S rRNA/L5/L18/L25 subcomplex. Contacts the 5S rRNA. Binds to the 5S rRNA independently of L5 and L18.

Functionally, this is one of the proteins that binds to the 5S RNA in the ribosome where it forms part of the central protuberance. The polypeptide is Large ribosomal subunit protein bL25 (Histophilus somni (strain 129Pt) (Haemophilus somnus)).